The sequence spans 359 residues: E3 ubiquitin-protein ligase RNF146 (359 aa).

An RING-type zinc finger spans residues 36 to 74 (CAICLQTCVHPVSLPCKHVFCYLCVKGASWLGKRCALCR). Residues lysine 84 and lysine 94 each participate in a glycyl lysine isopeptide (Lys-Gly) (interchain with G-Cter in ubiquitin) cross-link. In terms of domain architecture, WWE spans 91–167 (EELKAASRGN…EHGRRRKIKR (77 aa)). Tyrosine 107, arginine 110, and tryptophan 114 together coordinate a glycoprotein. Lysine 130 is covalently cross-linked (Glycyl lysine isopeptide (Lys-Gly) (interchain with G-Cter in ubiquitin)). Residues tyrosine 144, glutamine 153, arginine 163, and lysine 175 each coordinate a glycoprotein. Residue lysine 175 forms a Glycyl lysine isopeptide (Lys-Gly) (interchain with G-Cter in ubiquitin) linkage. The disordered stretch occupies residues 259-359 (ERSHRGEGEE…PDGQCTVTEV (101 aa)). A compositionally biased stretch (acidic residues) spans 284–298 (SVEETESDASSDSED). Phosphoserine occurs at positions 290 and 294. Positions 306–322 (HSLTQQRLLVPNANQTV) are enriched in polar residues.

Can form homooligomers. Interacts with PARsylated AXIN1, AXIN2, BLZF1, CASC3, H1-2, IPO7, LIG3, NCL, PARP1, XRCC1, XRCC5 and XRCC6. Interacts with DDB1, DHX15, IQGAP1, LRPPRC, PARP2, PRKDC, RUVBL2, TNKS1 and TNKS2. Binding often leads to interactor ubiquitination, in the presence of the appropriate E1 and E2 enzymes, and proteasomal degradation. Ubiquitinated; autoubiquitinated. Autoubiquitination is enhanced upon poly(ADP-ribose)-binding.

The protein resides in the cytoplasm. Its subcellular location is the cytosol. The protein localises to the nucleus. It carries out the reaction S-ubiquitinyl-[E2 ubiquitin-conjugating enzyme]-L-cysteine + [acceptor protein]-L-lysine = [E2 ubiquitin-conjugating enzyme]-L-cysteine + N(6)-ubiquitinyl-[acceptor protein]-L-lysine.. The protein operates within protein modification; protein ubiquitination. Functionally, E3 ubiquitin-protein ligase that specifically binds poly-ADP-ribosylated (PARsylated) proteins and mediates their ubiquitination and subsequent degradation. May regulate many important biological processes, such as cell survival and DNA damage response. Acts as an activator of the Wnt signaling pathway by mediating the ubiquitination of PARsylated AXIN1 and AXIN2, 2 key components of the beta-catenin destruction complex. Acts in cooperation with tankyrase proteins (TNKS and TNKS2), which mediate PARsylation of target proteins AXIN1, AXIN2, BLZF1, CASC3, TNKS and TNKS2. Recognizes and binds tankyrase-dependent PARsylated proteins via its WWE domain and mediates their ubiquitination, leading to their degradation. Different ubiquitin linkage types have been observed: TNKS2 undergoes ubiquitination at 'Lys-48' and 'Lys-63', while AXIN1 is only ubiquitinated at 'Lys-48'. May regulate TNKS and TNKS2 subcellular location, preventing aggregation at a centrosomal location. Neuroprotective protein. Protects the brain against N-methyl-D-aspartate (NMDA) receptor-mediated glutamate excitotoxicity and ischemia, by interfering with PAR-induced cell death, called parthanatos. Prevents nuclear translocation of AIFM1 in a PAR-binding dependent manner. Does not affect PARP1 activation. Protects against cell death induced by DNA damaging agents, such as N-methyl-N-nitro-N-nitrosoguanidine (MNNG) and rescues cells from G1 arrest. Promotes cell survival after gamma-irradiation. Facilitates DNA repair. The protein is E3 ubiquitin-protein ligase RNF146 (RNF146) of Ailuropoda melanoleuca (Giant panda).